A 175-amino-acid polypeptide reads, in one-letter code: Adenine phosphoribosyltransferase (175 aa).

This sequence belongs to the purine/pyrimidine phosphoribosyltransferase family. As to quaternary structure, homodimer.

It is found in the cytoplasm. It carries out the reaction AMP + diphosphate = 5-phospho-alpha-D-ribose 1-diphosphate + adenine. It participates in purine metabolism; AMP biosynthesis via salvage pathway; AMP from adenine: step 1/1. Catalyzes a salvage reaction resulting in the formation of AMP, that is energically less costly than de novo synthesis. This chain is Adenine phosphoribosyltransferase, found in Clavibacter michiganensis subsp. michiganensis (strain NCPPB 382).